Here is a 260-residue protein sequence, read N- to C-terminus: Snake venom serine protease homolog 2 (260 aa).

The first 18 residues, 1-18 (MVLIRVLANLLVLQLSYA), serve as a signal peptide directing secretion. The propeptide occupies 19-24 (QKSSEL). In terms of domain architecture, Peptidase S1 spans 25 to 251 (VIGGDECNIN…YTDWIQSIIA (227 aa)). 6 disulfide bridges follow: cysteine 31-cysteine 165, cysteine 52-cysteine 68, cysteine 100-cysteine 258, cysteine 144-cysteine 212, cysteine 176-cysteine 191, and cysteine 202-cysteine 227. Asparagine 123 carries N-linked (GlcNAc...) asparagine glycosylation. Asparagine 253 is a glycosylation site (N-linked (GlcNAc...) asparagine).

The protein belongs to the peptidase S1 family. Snake venom subfamily. In terms of tissue distribution, expressed by the venom gland.

It is found in the secreted. Snake venom serine protease homolog that may act in the hemostasis system of the prey. The protein is Snake venom serine protease homolog 2 of Macrovipera lebetinus (Levantine viper).